Here is a 296-residue protein sequence, read N- to C-terminus: Uracil phosphoribosyltransferase, chloroplastic (296 aa).

A chloroplast-targeting transit peptide spans 1 to 61 (MACSIGNAFR…SSSLSRRTIR (61 aa)). Ala-2 is subject to N-acetylalanine. 148–151 (REPI) is a GTP binding site. 5-phospho-alpha-D-ribose 1-diphosphate is bound by residues Arg-158, Arg-183, Asp-211, 216–219 (TGGT), and Asp-282. 281–283 (GDA) contributes to the uracil binding site.

Belongs to the UPRTase family. The cofactor is Mg(2+).

The protein resides in the plastid. It localises to the chloroplast. It carries out the reaction UMP + diphosphate = 5-phospho-alpha-D-ribose 1-diphosphate + uracil. Its pathway is pyrimidine metabolism; UMP biosynthesis via salvage pathway; UMP from uracil: step 1/1. With respect to regulation, allosterically activated by GTP. Uracil phosphoribosyltransferase (UPRT) that catalyzes the conversion of uracil and 5-phospho-alpha-D-ribose 1-diphosphate (PRPP) to UMP and diphosphate. Is probably the only functional UPRT, since the dual-domain proteins of the UKL family seem to lack this activity. The sequence is that of Uracil phosphoribosyltransferase, chloroplastic (UPP) from Arabidopsis thaliana (Mouse-ear cress).